Reading from the N-terminus, the 387-residue chain is Mannitol-1-phosphate 5-dehydrogenase (387 aa).

An NAD(+)-binding site is contributed by 3 to 14; sequence ALHFGAGNIGRG.

Belongs to the mannitol dehydrogenase family.

It catalyses the reaction D-mannitol 1-phosphate + NAD(+) = beta-D-fructose 6-phosphate + NADH + H(+). This Yersinia pestis bv. Antiqua (strain Antiqua) protein is Mannitol-1-phosphate 5-dehydrogenase.